A 330-amino-acid chain; its full sequence is Protein FAM170A (330 aa).

Disordered stretches follow at residues 1 to 54 (MKRR…VTST), 76 to 104 (HRDSPQPQSPLAQVQERGETPPRSQHVSL), and 169 to 218 (VGTP…AKTP). Over residues 174 to 185 (SDVSTRNLLSDS) the composition is skewed to polar residues. A compositionally biased stretch (basic and acidic residues) spans 189 to 200 (GEEKEHEERTES). Position 217 is a phosphothreonine (threonine 217). The segment at 228-252 (FRCMACCRVFTTMEALQEHVQFGIR) adopts a C2H2-type; degenerate zinc-finger fold. Positions 270–330 (NMESESTQDE…VFHSPKDRNS (61 aa)) are disordered. The span at 275–293 (STQDEQEEENGNEKEEEEK) shows a compositional bias: acidic residues. A Phosphoserine modification is found at serine 315.

Belongs to the FAM170 family. Expressed strongly in testis and brain and weakly in prostate, spleen, pancreas and uterus.

It localises to the nucleus. In terms of biological role, acts as a nuclear transcription factor that positively regulates the expression of heat shock genes. Binds to heat shock promoter elements (HSE). This Homo sapiens (Human) protein is Protein FAM170A (FAM170A).